A 353-amino-acid polypeptide reads, in one-letter code: Photosystem II protein D1 (353 aa).

Position 2 is an N-acetylthreonine (threonine 2). Position 2 is a phosphothreonine (threonine 2). 3 helical membrane passes run tyrosine 29–serine 46, histidine 118–leucine 133, and tryptophan 142–alanine 156. Histidine 118 provides a ligand contact to chlorophyll a. Pheophytin a is bound at residue tyrosine 126. Aspartate 170 and glutamate 189 together coordinate [CaMn4O5] cluster. A helical transmembrane segment spans residues phenylalanine 197–leucine 218. Histidine 198 is a binding site for chlorophyll a. A quinone contacts are provided by residues histidine 215 and serine 264–phenylalanine 265. A Fe cation-binding site is contributed by histidine 215. Histidine 272 is a Fe cation binding site. A helical transmembrane segment spans residues phenylalanine 274 to leucine 288. [CaMn4O5] cluster contacts are provided by histidine 332, glutamate 333, aspartate 342, and alanine 344. Positions alanine 345–glycine 353 are excised as a propeptide.

Belongs to the reaction center PufL/M/PsbA/D family. PSII is composed of 1 copy each of membrane proteins PsbA, PsbB, PsbC, PsbD, PsbE, PsbF, PsbH, PsbI, PsbJ, PsbK, PsbL, PsbM, PsbT, PsbX, PsbY, PsbZ, Psb30/Ycf12, at least 3 peripheral proteins of the oxygen-evolving complex and a large number of cofactors. It forms dimeric complexes. The cofactor is The D1/D2 heterodimer binds P680, chlorophylls that are the primary electron donor of PSII, and subsequent electron acceptors. It shares a non-heme iron and each subunit binds pheophytin, quinone, additional chlorophylls, carotenoids and lipids. D1 provides most of the ligands for the Mn4-Ca-O5 cluster of the oxygen-evolving complex (OEC). There is also a Cl(-1) ion associated with D1 and D2, which is required for oxygen evolution. The PSII complex binds additional chlorophylls, carotenoids and specific lipids.. Post-translationally, tyr-161 forms a radical intermediate that is referred to as redox-active TyrZ, YZ or Y-Z. In terms of processing, C-terminally processed by CTPA; processing is essential to allow assembly of the oxygen-evolving complex and thus photosynthetic growth.

It is found in the plastid. Its subcellular location is the chloroplast thylakoid membrane. The enzyme catalyses 2 a plastoquinone + 4 hnu + 2 H2O = 2 a plastoquinol + O2. Its function is as follows. Photosystem II (PSII) is a light-driven water:plastoquinone oxidoreductase that uses light energy to abstract electrons from H(2)O, generating O(2) and a proton gradient subsequently used for ATP formation. It consists of a core antenna complex that captures photons, and an electron transfer chain that converts photonic excitation into a charge separation. The D1/D2 (PsbA/PsbD) reaction center heterodimer binds P680, the primary electron donor of PSII as well as several subsequent electron acceptors. In Glycine max (Soybean), this protein is Photosystem II protein D1.